The primary structure comprises 213 residues: Imidazole glycerol phosphate synthase subunit HisH (213 aa).

One can recognise a Glutamine amidotransferase type-1 domain in the interval 4 to 213 (SIAIVDYGMG…LYRNFVHWKP (210 aa)). Cysteine 83 functions as the Nucleophile in the catalytic mechanism. Active-site residues include histidine 193 and glutamate 195.

Heterodimer of HisH and HisF.

It is found in the cytoplasm. It catalyses the reaction 5-[(5-phospho-1-deoxy-D-ribulos-1-ylimino)methylamino]-1-(5-phospho-beta-D-ribosyl)imidazole-4-carboxamide + L-glutamine = D-erythro-1-(imidazol-4-yl)glycerol 3-phosphate + 5-amino-1-(5-phospho-beta-D-ribosyl)imidazole-4-carboxamide + L-glutamate + H(+). It carries out the reaction L-glutamine + H2O = L-glutamate + NH4(+). It participates in amino-acid biosynthesis; L-histidine biosynthesis; L-histidine from 5-phospho-alpha-D-ribose 1-diphosphate: step 5/9. IGPS catalyzes the conversion of PRFAR and glutamine to IGP, AICAR and glutamate. The HisH subunit catalyzes the hydrolysis of glutamine to glutamate and ammonia as part of the synthesis of IGP and AICAR. The resulting ammonia molecule is channeled to the active site of HisF. In Burkholderia lata (strain ATCC 17760 / DSM 23089 / LMG 22485 / NCIMB 9086 / R18194 / 383), this protein is Imidazole glycerol phosphate synthase subunit HisH.